Reading from the N-terminus, the 213-residue chain is THAP domain-containing protein 1 (213 aa).

The segment at 1-81 (MVQSCSAYGC…LKENAVPTIF (81 aa)) adopts a THAP-type zinc-finger fold. The short motif at 134-137 (DHNY) is the HCFC1-binding motif (HBM) element. Residues 139–185 (VEDTMHQRKRIHQLEQQVEKLRKKLKTAQQRCRRQERQLEKLKEVVH) form an involved in homodimer formation region. Residues 139–190 (VEDTMHQRKRIHQLEQQVEKLRKKLKTAQQRCRRQERQLEKLKEVVHFQKEK) adopt a coiled-coil conformation.

This sequence belongs to the THAP1 family. Homodimer. Interacts with PAWR. Component of a THAP1/THAP3-HCFC1-OGT complex that contains, either THAP1 or THAP3, HCFC1 and OGT. Interacts with OGT. Interacts (via the HBM) with HCFC1 (via the Kelch-repeat domain); the interaction recruits HCFC1 to the RRM1 promoter. In terms of tissue distribution, highly expressed in heart, skeletal muscle, kidney and liver. Weaker expression in brain and placenta.

It localises to the nucleus. Its subcellular location is the nucleoplasm. The protein resides in the PML body. In terms of biological role, DNA-binding transcription regulator that regulates endothelial cell proliferation and G1/S cell-cycle progression. Specifically binds the 5'-[AT]NTNN[GT]GGCA[AGT]-3' core DNA sequence and acts by modulating expression of pRB-E2F cell-cycle target genes, including RRM1. Component of a THAP1/THAP3-HCFC1-OGT complex that is required for the regulation of the transcriptional activity of RRM1. May also have pro-apoptotic activity by potentiating both serum-withdrawal and TNF-induced apoptosis. This is THAP domain-containing protein 1 (THAP1) from Homo sapiens (Human).